The following is a 170-amino-acid chain: MNLRDYIRDIPDFPKEGIVYFDITPLLAEPKAFQYTIDQLAERFADYKIDKIAAAEARGFIFGAPLATKLDIGFVPIRKPGKLPYETISVSYDLEYGTDNLSMHVDAVAKDENVLLIDDVLATGGTAEGMVKLVEKAGGKVSGMGFIAELTFLDGKSKLSGIDTTSLIQL.

It belongs to the purine/pyrimidine phosphoribosyltransferase family. In terms of assembly, homodimer.

Its subcellular location is the cytoplasm. The enzyme catalyses AMP + diphosphate = 5-phospho-alpha-D-ribose 1-diphosphate + adenine. Its pathway is purine metabolism; AMP biosynthesis via salvage pathway; AMP from adenine: step 1/1. Functionally, catalyzes a salvage reaction resulting in the formation of AMP, that is energically less costly than de novo synthesis. This is Adenine phosphoribosyltransferase from Maridesulfovibrio salexigens (strain ATCC 14822 / DSM 2638 / NCIMB 8403 / VKM B-1763) (Desulfovibrio salexigens).